Consider the following 69-residue polypeptide: uncharacterized protein (69 aa).

Positions 21-64 (LNLLKGGEEKISEVELKLDEMEKKMDSLLVQLEDLHRDNNDLAK) form a coiled coil.

This is an uncharacterized protein from Saccharomyces cerevisiae (strain ATCC 204508 / S288c) (Baker's yeast).